The following is a 157-amino-acid chain: Probable succinate transporter subunit YjjB (157 aa).

4 helical membrane passes run 8-28 (FALA…AMVF), 50-70 (MILM…SMLV), 87-107 (VFTV…TAMI), and 129-149 (FLTA…PGLW).

It belongs to the ThrE exporter (TC 2.A.79) family. As to quaternary structure, the transporter is composed of YjjB and YjjP.

The protein localises to the cell inner membrane. In terms of biological role, involved in succinate export with YjjP. Both proteins are required for export. The protein is Probable succinate transporter subunit YjjB of Escherichia coli (strain SE11).